A 461-amino-acid chain; its full sequence is uncharacterized protein (461 aa).

13 helical membrane passes run 13–33 (GIIF…LPFE), 54–74 (ALHV…LGLV), 81–101 (VGFA…ATAL), 120–140 (GNLF…SMWM), 170–190 (VFVL…TLVG), 211–231 (YGLP…YIIF), 256–276 (FIIF…NPFI), 286–306 (IASF…STGV), 314–334 (SNTD…SAVL), 349–369 (FMID…FIIF), 377–397 (TASA…LGMP), 399–419 (IGLA…PVAT), and 439–459 (VGFL…YMFW).

It belongs to the SLC13A/DASS transporter (TC 2.A.47) family. NADC subfamily.

Its subcellular location is the cell membrane. This is an uncharacterized protein from Haemophilus influenzae (strain ATCC 51907 / DSM 11121 / KW20 / Rd).